The following is a 413-amino-acid chain: Probable tRNA pseudouridine synthase D (413 aa).

Residue Asp97 is the Nucleophile of the active site. One can recognise a TRUD domain in the interval 167–370; that stretch reads AAPNYYGYQR…YGTYRRVRLE (204 aa).

This sequence belongs to the pseudouridine synthase TruD family.

The enzyme catalyses uridine(13) in tRNA = pseudouridine(13) in tRNA. In terms of biological role, could be responsible for synthesis of pseudouridine from uracil-13 in transfer RNAs. The sequence is that of Probable tRNA pseudouridine synthase D from Pyrobaculum aerophilum (strain ATCC 51768 / DSM 7523 / JCM 9630 / CIP 104966 / NBRC 100827 / IM2).